The chain runs to 914 residues: Zinc finger protein 717 (914 aa).

One can recognise a KRAB domain in the interval 22–93; sequence VSFEEVAVHF…EETPNLRLSA (72 aa). A C2H2-type 1; degenerate zinc finger spans residues 209–231; that stretch reads FQCNEQGKTFNTEAMFFIHKRVH. A C2H2-type 2; degenerate zinc finger spans residues 266 to 277; that stretch reads RKSDFTKHQQTH. The C2H2-type 3; degenerate zinc-finger motif lies at 283–305; the sequence is YECVECEKPSISKSDLMLQCKMP. 12 consecutive C2H2-type zinc fingers follow at residues 311–333, 339–361, 367–389, 395–417, 423–445, 451–473, 479–501, 507–529, 535–557, 563–585, 591–613, and 619–641; these read YACNWCEKLFSYKSSLIIHQRIH, YGCNECGKTFRRKSFLTLHERTH, YKCIECGKTFHCKSLLTLHHRTH, YQCSECGKTFSQKSYLTIHHRTH, YACDHCEEAFSHKSRLTVHQRTH, YECNECGKPFINKSNLRLHQRTH, YECNECGKTFHRKSFLTIHQWTH, YECNECGKTFRCKSFLTVHQRTH, YACNECGKTYSHKSYLTVHHRTH, YECNECGKSFHCKSFLTIHQRTH, YECNECEKTFINKLNLGIHKRTH, and YECNECGKTFRQKSNLSTHQGTH. Residues 649–669 form a C2H2-type 16; degenerate zinc finger; that stretch reads CNECGKTFHRKSFLTIHQRTH. A C2H2-type 17; degenerate zinc finger spans residues 741–752; sequence QKSVLTVHHRTH. 5 consecutive C2H2-type zinc fingers follow at residues 758-780, 786-808, 814-836, 842-864, and 870-892; these read YECNECGKTFCHKSNLSTHQGTH, YECDECRKTFYDKTVLTIHQRTH, FECKECRKTFSQKSKLFVHHRTH, FRCNECRKTFSQKSGLSIHQRTH, and YECKECGKTFCQKSHLSRHQQTH.

It belongs to the krueppel C2H2-type zinc-finger protein family.

Its subcellular location is the nucleus. Its function is as follows. May be involved in transcriptional regulation. The polypeptide is Zinc finger protein 717 (Homo sapiens (Human)).